Consider the following 499-residue polypeptide: Ammonium transporter MEP2 (499 aa).

At 1–31 the chain is on the extracellular side; sequence MSYNFTGTPTGEGTGGNSLTTDLNTQFDLAN. Asn-4 carries an N-linked (GlcNAc...) asparagine glycan. Residues 32–52 form a helical membrane-spanning segment; the sequence is MGWIGVASAGVWIMVPGIGLL. Residues 53–62 lie on the Cytoplasmic side of the membrane; it reads YSGLSRKKHA. Residues 63–83 form a helical membrane-spanning segment; that stretch reads LSLLWASMMASAVCIFQWFFW. Over 84–122 the chain is Extracellular; the sequence is GYSLAFSHNTRGNGFIGTLEFFGFRNVLGAPSSVSSLPD. Residues 123 to 143 traverse the membrane as a helical segment; that stretch reads ILFAVYQGMFAAVTGALMLGG. At 144 to 152 the chain is on the cytoplasmic side; that stretch reads ACERARLFP. Residues 153 to 173 form a helical membrane-spanning segment; the sequence is MMVFLFLWMTIVYCPIACWVW. Residues 174-187 are Extracellular-facing; that stretch reads NAEGWLVKLGSLDY. Residues 188–208 traverse the membrane as a helical segment; that stretch reads AGGLCVHLTSGHGGLVYALIL. The Cytoplasmic portion of the chain corresponds to 209–230; it reads GKRNDPVTRKGMPKYKPHSVTS. A helical membrane pass occupies residues 231-251; that stretch reads VVLGTVFLWFGWMFFNGGSAG. The Extracellular segment spans residues 252-257; it reads NATIRA. The helical transmembrane segment at 258–278 threads the bilayer; that stretch reads WYSIMSTNLAAACGGLTWMVI. Residues 279–289 lie on the Cytoplasmic side of the membrane; sequence DYFRCGRKWTT. A helical membrane pass occupies residues 290–312; that stretch reads VGLCSGIIAGLVGITPAAGFVPI. Residues 313-315 lie on the Extracellular side of the membrane; that stretch reads WSA. A helical membrane pass occupies residues 316–338; the sequence is VVIGVVTGAGCNLAVDLKSLLRI. At 339-346 the chain is on the cytoplasmic side; it reads DDGLDCYS. A helical membrane pass occupies residues 347 to 367; sequence IHGVGGCIGSVLTGIFAADYV. Residues 368-393 lie on the Extracellular side of the membrane; sequence NATAGSYISPIDGGWINHHYKQVGYQ. Residues 394–414 traverse the membrane as a helical segment; it reads LAGICAALAWTVTVTSILLLT. Over 415-499 the chain is Cytoplasmic; that stretch reads MNAIPFLKLR…SSTKNTDHIV (85 aa). The interval 428–441 is enhancer domain; that stretch reads DEEELGTDAAQIGE. A linker domain region spans residues 442–449; that stretch reads FTYEESTA. The tract at residues 450–485 is autoinhibitory domain; that stretch reads YIPEPIRSKTSAQMPPPHENIDDKIVGNTDAEKNST. Residues 455–499 are disordered; the sequence is IRSKTSAQMPPPHENIDDKIVGNTDAEKNSTPSDASSTKNTDHIV. The residue at position 457 (Ser-457) is a Phosphoserine. Basic and acidic residues predominate over residues 468 to 482; it reads ENIDDKIVGNTDAEK. Polar residues predominate over residues 483 to 493; sequence NSTPSDASSTK.

Belongs to the ammonia transporter channel (TC 1.A.11.2) family. In terms of processing, phosphorylated at Ser-457 by the TORC1 effector kinase NPR1 under nitrogen-limiting conditions which causes a conformational change in the C-terminal region (CTR) to form an open active conformation. Supplementation of nitrogen source leads to inactivation and instant Ser-457 dephosphorylation via plasma membrane PSR1 and PSR2 redundant phosphatases. Post-translationally, the residue Asn-4 of the protein's N-terminal tail is the only site that is glycosylated.

The protein localises to the cell membrane. Functionally, transporter for ammonium (both charged and uncharged NH3 and NH4) to use as a nitrogen source. The affinity of MEP2 is about twenty times higher than that of MEP1. MEP3 has the lowest affinity. Under ammonium limitation acts as an ammonium sensor, generating a signal that leads to pseudohyphal (filamentous) growth. The sequence is that of Ammonium transporter MEP2 from Saccharomyces cerevisiae (strain ATCC 204508 / S288c) (Baker's yeast).